The following is a 256-amino-acid chain: Isoprenyl transferase (256 aa).

Asp33 is an active-site residue. Asp33 is a Mg(2+) binding site. Residues 34–37 (GNGR), Trp38, Arg46, His50, and 78–80 (STE) contribute to the substrate site. Catalysis depends on Asn81, which acts as the Proton acceptor. Substrate is bound by residues Trp82, Arg84, Arg201, and 207–209 (RIS). A Mg(2+)-binding site is contributed by Glu220.

This sequence belongs to the UPP synthase family. In terms of assembly, homodimer. Mg(2+) is required as a cofactor.

In terms of biological role, catalyzes the condensation of isopentenyl diphosphate (IPP) with allylic pyrophosphates generating different type of terpenoids. The sequence is that of Isoprenyl transferase from Staphylococcus aureus (strain Mu50 / ATCC 700699).